The primary structure comprises 718 residues: Polyribonucleotide nucleotidyltransferase (718 aa).

2 residues coordinate Mg(2+): D491 and D497. The region spanning 558 to 617 (PRMLTIKINPEKIRDVIGKGGATIRALTEETGTQIDISDDGTIVIASVDEGQAKEAQRRI) is the KH domain. The S1 motif domain occupies 627–695 (GQVYDGSVLR…EKGRLRLSVK (69 aa)).

The protein belongs to the polyribonucleotide nucleotidyltransferase family. It depends on Mg(2+) as a cofactor.

Its subcellular location is the cytoplasm. It catalyses the reaction RNA(n+1) + phosphate = RNA(n) + a ribonucleoside 5'-diphosphate. Functionally, involved in mRNA degradation. Catalyzes the phosphorolysis of single-stranded polyribonucleotides processively in the 3'- to 5'-direction. This chain is Polyribonucleotide nucleotidyltransferase, found in Bordetella avium (strain 197N).